A 236-amino-acid polypeptide reads, in one-letter code: Protein Thf1 (236 aa).

Positions 180–220 (PVEKMQKDLEQYRSNLEKMTQARKTLEDIVAAERKRRQQNA) form a coiled coil. The segment at 206–236 (EDIVAAERKRRQQNAAPDRSPESASATEAPN) is disordered. Positions 227–236 (ESASATEAPN) are enriched in polar residues.

It belongs to the THF1 family.

May be involved in photosynthetic membrane biogenesis. The sequence is that of Protein Thf1 from Cyanothece sp. (strain PCC 7425 / ATCC 29141).